Reading from the N-terminus, the 878-residue chain is Microtubule-associated protein homolog maph-1.1 (878 aa).

Disordered regions lie at residues 224–425 (ALSD…AQAT) and 456–518 (EIPP…PVVP). Composition is skewed to low complexity over residues 241–268 (PSARPATTTGTATRPTRPAVPAASAPRA), 278–293 (SRPTTTRNAAPAPRTA), 310–321 (APTRAPVPARSA), and 328–339 (APAKPAANTAKA). Composition is skewed to basic and acidic residues over residues 416–425 (PPRHEVAQAT) and 480–496 (EEDKIPEPVDAFKKPDP).

It belongs to the MAP1A/MAP1B/MAP1S family. As to quaternary structure, interacts with dlg-1.

The protein localises to the cell projection. It is found in the dendrite. It localises to the perikaryon. Its subcellular location is the axon. The protein resides in the cytoplasm. The protein localises to the cytoskeleton. The chain is Microtubule-associated protein homolog maph-1.1 from Caenorhabditis elegans.